Here is a 623-residue protein sequence, read N- to C-terminus: MPHSDELDAGNVLAVENLNIAFMQDQQKIAAVRNLSFSLQRGETLAIVGESGSGKSVTALALMRLLEQAGGLVQCDKMLLRRRSRDVIELSEQSAAQMRHVRGADMAMIFQEPMTSLNPVFTVGEQIAESIRLHQNASREEAMVEAKRMLDQVRIPEAQTILSRYPHQLSGGMRQRVMIAMALSCRPAVLIADEPTTALDVTIQAQILQLIKVLQKEMSMGVIFITHDMGVVAEIADRVLVMYQGEAVETGTVEQIFHAPQHPYTRALLAAVPQLGAMKGLDYPRRFPLISLEHPAKQAPPIEQKTVVDGEPVLRVRNLVTRFPLRSGLLNRVTREVHAVEKVSFDLWPGETLSLVGESGSGKSTTGRALLRLVESQGGEIIFNGQRIDTLSPGKLQALRRDIQFIFQDPYASLDPRQTIGDSIIEPLRVHGLLPGKEAVARVAWLLERVGLLPEHAWRYPHEFSGGQRQRICIARALALNPKVIIADEAVSALDVSIRGQIINLLLDLQRDFGIAYLFISHDMAVVERISHRVAVMYLGQIVEIGPRRAVFENPQHPYTRKLLAAVPVAEPSRQRPQRVLLSDDLPSNIHLRGEEVAAVSLQCVGPGHYVAQPQSEYAFMRR.

2 consecutive ABC transporter domains span residues 15-269 (VENL…RALL) and 314-564 (LRVR…RKLL). ATP-binding positions include 49 to 56 (GESGSGKS) and 357 to 364 (GESGSGKS).

The protein belongs to the ABC transporter superfamily. Glutathione importer (TC 3.A.1.5.11) family. As to quaternary structure, the complex is composed of two ATP-binding proteins (GsiA), two transmembrane proteins (GsiC and GsiD) and a solute-binding protein (GsiB).

The protein resides in the cell inner membrane. It catalyses the reaction glutathione(out) + ATP + H2O = glutathione(in) + ADP + phosphate + H(+). Functionally, part of the ABC transporter complex GsiABCD involved in glutathione import. Responsible for energy coupling to the transport system. This chain is Glutathione import ATP-binding protein GsiA, found in Escherichia coli O157:H7.